Consider the following 439-residue polypeptide: MDICSRNEKLAIRRPAILVALALLLCSCKSTPPESMVTPPAGSKPPATTQQSSQPMRGIWLATVSRLDWPPVSSVNISNPTSRARVQQQAMIDKLDHLQRLGINTVFFQVKPDGTALWPSKILPWSDLMTGKIGENPGYDPLQFMLDEAHKRGMKVHAWFNPYRVSVNTKPGTIRELNSTLSQQPASVYVQHRDWIRTSGDRFVLDPGIPEVQDWITSIVAEVVSRYPVDGVQFDDYFYTESPGSRLNDNETYRKYGGAFASKADWRRNNTQQLIAKVSHTIKSIKPEVEFGVSPAGVWRNRSHDPLGSDTRGAAAYDESYADTRRWVEQGLLDYIAPQIYWPFSRSAARYDVLAKWWADVVKPTRTRLYIGIAFYKVGEPSKIEPDWMINGGVPELKKQLDLNDALPEISGTILFREDYLNKPQTQQAVSYLQSRWGS.

Residues 1–27 form the signal peptide; the sequence is MDICSRNEKLAIRRPAILVALALLLCS. C28 carries the N-palmitoyl cysteine lipid modification. The S-diacylglycerol cysteine moiety is linked to residue C28. The segment at 34-54 is disordered; sequence ESMVTPPAGSKPPATTQQSSQ.

This sequence belongs to the glycosyl hydrolase-like 10 (GHL10) family.

The protein resides in the cell outer membrane. Divisome-localized glycosyl hydrolase that cleaves peptide-free (denuded) peptidoglycans. This chain is Glycosyl hydrolase DigH, found in Escherichia coli O6:H1 (strain CFT073 / ATCC 700928 / UPEC).